The sequence spans 591 residues: Glutathione hydrolase (591 aa).

The first 41 residues, Met1–Pro41, serve as a signal peptide directing secretion. Arg122 contributes to the L-glutamate binding site. Asn135, Asn270, and Asn389 each carry an N-linked (GlcNAc...) asparagine glycan. Thr393 functions as the Nucleophile in the catalytic mechanism. Residues Thr411, Glu432, and Ser464–Ala465 contribute to the L-glutamate site. N-linked (GlcNAc...) asparagine glycosylation is present at Asn534.

The protein belongs to the gamma-glutamyltransferase family.

It carries out the reaction an N-terminal (5-L-glutamyl)-[peptide] + an alpha-amino acid = 5-L-glutamyl amino acid + an N-terminal L-alpha-aminoacyl-[peptide]. It catalyses the reaction glutathione + H2O = L-cysteinylglycine + L-glutamate. The enzyme catalyses an S-substituted glutathione + H2O = an S-substituted L-cysteinylglycine + L-glutamate. It functions in the pathway mycotoxin biosynthesis. Its function is as follows. Gamma-glutamyltransferase; part of the gene cluster that mediates the biosynthesis of the secondary metabolite ustiloxin B, an antimitotic tetrapeptide. First, ustA is processed by the subtilisin-like endoprotease Kex2 that is outside the ustiloxin B gene cluster, at the C-terminal side of Arg-Lys, after transfer to Golgi apparatus through the endoplasmic reticulum (ER). Cleavage by KEX2 generates 16 peptides YAIG-I to YAIG-XVI. To process the precursor peptide further, at least two peptidases are necessary to cleave the N-terminal and C-terminal sides of the Tyr-Ala-Ile-Gly core peptide which serves as backbone for the synthesis of ustiloxin B, through cyclization and modification of the tyrosine with a non-protein coding amino acid, norvaline. One of the two peptidases must be the serine peptidase ustP; and the other pepdidase is probably ustH. Macrocyclization of the core peptide derived from ustA requires the tyrosinase ustQ, as well as the homologous oxidases ustYa and ustYb, and leads to the production of the first cyclization product N-desmethylustiloxin F. For the formation of N-desmethylustiloxin F, three oxidation steps are required, hydroxylation at the benzylic position, hydroxylation at either the aromatic ring of Tyr or beta-position of Ile, and oxidative cyclization. UstQ may catalyze the oxidation of a phenol moiety, whereas the ustYa and ustYb are most likely responsible for the remaining two-step oxidations. N-desmethylustiloxin F is then methylated by ustM to yield ustiloxin F which in turn substrate of the cytochrome P450 monooxygenase ustC which catalyzes the formation of S-deoxyustiloxin H. The flavoprotein monooxygenases ustF1 and ustF2 then participate in the modification of the side chain of S-deoxyustiloxin H, leading to the synthesis of an oxime intermediate, via ustiloxin H. Finally, carboxylative dehydration performed by the cysteine desulfurase-like protein ustD yields ustiloxin B. In Aspergillus flavus (strain ATCC 200026 / FGSC A1120 / IAM 13836 / NRRL 3357 / JCM 12722 / SRRC 167), this protein is Glutathione hydrolase.